Reading from the N-terminus, the 454-residue chain is Glutamate mutase epsilon subunit (454 aa).

Arginine 67 is a binding site for L-glutamate. Glycine 69 serves as a coordination point for adenosylcob(III)alamin. Arginine 99 lines the L-glutamate pocket. Asparagine 122 contributes to the adenosylcob(III)alamin binding site. Residues 148-149, glutamate 170, and tyrosine 176 each bind L-glutamate; that span reads RH. Residue proline 179 coordinates adenosylcob(III)alamin. L-glutamate is bound at residue tyrosine 180. Positions 296, 325, 329, and 333 each coordinate adenosylcob(III)alamin.

It belongs to the methylaspartate mutase GlmE subunit family. Heterotetramer composed of 2 epsilon subunits (GlmE) and 2 sigma subunits (GlmS). GlmE exists as a homodimer and GlmS as a monomer. Adenosylcob(III)alamin is required as a cofactor.

The catalysed reaction is (2S,3S)-3-methyl-L-aspartate = L-glutamate. It participates in amino-acid degradation; L-glutamate degradation via mesaconate pathway; acetate and pyruvate from L-glutamate: step 1/4. In terms of biological role, catalyzes the carbon skeleton rearrangement of L-glutamate to L-threo-3-methylaspartate ((2S,3S)-3-methylaspartate). The sequence is that of Glutamate mutase epsilon subunit from Shigella dysenteriae serotype 1 (strain Sd197).